A 164-amino-acid polypeptide reads, in one-letter code: Phosphopantetheine adenylyltransferase (164 aa).

Residue threonine 10 participates in substrate binding. ATP contacts are provided by residues 10–11 (TF) and histidine 18. Substrate is bound by residues lysine 44, leucine 76, and arginine 90. Residues 91 to 93 (GLR), glutamate 101, and 126 to 132 (YAFISSS) each bind ATP.

The protein belongs to the bacterial CoaD family. In terms of assembly, homohexamer. The cofactor is Mg(2+).

The protein localises to the cytoplasm. The catalysed reaction is (R)-4'-phosphopantetheine + ATP + H(+) = 3'-dephospho-CoA + diphosphate. It participates in cofactor biosynthesis; coenzyme A biosynthesis; CoA from (R)-pantothenate: step 4/5. Functionally, reversibly transfers an adenylyl group from ATP to 4'-phosphopantetheine, yielding dephospho-CoA (dPCoA) and pyrophosphate. This is Phosphopantetheine adenylyltransferase from Halorhodospira halophila (strain DSM 244 / SL1) (Ectothiorhodospira halophila (strain DSM 244 / SL1)).